Consider the following 208-residue polypeptide: Interleukin-6 (208 aa).

An N-terminal signal peptide occupies residues Met1 to Pro29. Asn38 is a glycosylation site (N-linked (GlcNAc...) asparagine). Cys72 and Cys78 are disulfide-bonded. At Ser81 the chain carries Phosphoserine. An intrachain disulfide couples Cys101 to Cys111.

This sequence belongs to the IL-6 superfamily. As to quaternary structure, component of a hexamer of two molecules each of IL6, IL6R and IL6ST; first binds to IL6R to associate with the signaling subunit IL6ST. Interacts with IL6R (via the N-terminal ectodomain); this interaction may be affected by IL6R-binding with SORL1, hence decreasing IL6 cis signaling. Interacts with SORL1 (via the N-terminal ectodomain); this interaction leads to IL6 internalization and lysosomal degradation. May form a trimeric complex with the soluble SORL1 ectodomain and soluble IL6R receptor; this interaction might stabilize circulating IL6, hence promoting IL6 trans signaling.

Its subcellular location is the secreted. Cytokine with a wide variety of biological functions in immunity, tissue regeneration, and metabolism. Binds to IL6R, then the complex associates to the signaling subunit IL6ST/gp130 to trigger the intracellular IL6-signaling pathway. The interaction with the membrane-bound IL6R and IL6ST stimulates 'classic signaling', whereas the binding of IL6 and soluble IL6R to IL6ST stimulates 'trans-signaling'. Alternatively, 'cluster signaling' occurs when membrane-bound IL6:IL6R complexes on transmitter cells activate IL6ST receptors on neighboring receiver cells. In terms of biological role, IL6 is a potent inducer of the acute phase response. Rapid production of IL6 contributes to host defense during infection and tissue injury, but excessive IL6 synthesis is involved in disease pathology. In the innate immune response, is synthesized by myeloid cells, such as macrophages and dendritic cells, upon recognition of pathogens through toll-like receptors (TLRs) at the site of infection or tissue injury. In the adaptive immune response, is required for the differentiation of B cells into immunoglobulin-secreting cells. Plays a major role in the differentiation of CD4(+) T cell subsets. Essential factor for the development of T follicular helper (Tfh) cells that are required for the induction of germinal-center formation. Required to drive naive CD4(+) T cells to the Th17 lineage. Also required for proliferation of myeloma cells and the survival of plasmablast cells. Functionally, acts as an essential factor in bone homeostasis and on vessels directly or indirectly by induction of VEGF, resulting in increased angiogenesis activity and vascular permeability. Induces, through 'trans-signaling' and synergistically with IL1B and TNF, the production of VEGF. Involved in metabolic controls, is discharged into the bloodstream after muscle contraction increasing lipolysis and improving insulin resistance. 'Trans-signaling' in central nervous system also regulates energy and glucose homeostasis. Mediates, through GLP-1, crosstalk between insulin-sensitive tissues, intestinal L cells and pancreatic islets to adapt to changes in insulin demand. Also acts as a myokine. Plays a protective role during liver injury, being required for maintenance of tissue regeneration. Also has a pivotal role in iron metabolism by regulating HAMP/hepcidin expression upon inflammation or bacterial infection. Through activation of IL6ST-YAP-NOTCH pathway, induces inflammation-induced epithelial regeneration. This is Interleukin-6 (IL6) from Bos taurus (Bovine).